Consider the following 447-residue polypeptide: MEYDEKLARFRQVHLNPFNKQQHEQGAGEEAPGITSQARLPELPPGEPEFRCPERVMDLGLSEDHFARPVGLFLASDVQQLRQAIQECKQVILDLPEHSEKQKDAVVRLIHLRLKLQELKDPNEDEPNIRVLLEHRFYKEKSKSVKQTCDKCNTVIWGLIQTWYTCTGCYYRCHSKCLNLISKPCVRSKVSHQAEYELNICPEAGLDSQDYRCAECRAPISLRGVPSEARQCDYTGQYYCSHCHWNDLAVIPARVVHNWDFEPRKVSRGSMRYLALMMSRPVLRLREINPLLFNYVEELVEIRKLRQDILLMKPYFITCREAMAARLLLQLQDRQHFVENDEMYSVQDLLDTHTGRLGCSLAETHTLFAKHIKLDCERCQAKGFVCELCREGDVLFPFDSHTSVCADCSAVFHRDCYYDNSTTCPRCARLTLRKQSLFREPGPDLDA.

Residues proline 17–glutamate 47 are disordered. 2 consecutive Phorbol-ester/DAG-type zinc fingers follow at residues glutamate 134–cysteine 185 and threonine 364–cysteine 424. Serine 436 is modified (phosphoserine).

Belongs to the DEF8 family. In terms of assembly, interacts (via C-terminus) with PLEKHM1; this interaction is weak but increased in a RAB7A-dependent manner.

Positively regulates lysosome peripheral distribution and ruffled border formation in osteoclasts. Involved in bone resorption. This is Differentially expressed in FDCP 8 homolog (DEF8) from Bos taurus (Bovine).